A 99-amino-acid chain; its full sequence is Acylphosphatase (99 aa).

One can recognise an Acylphosphatase-like domain in the interval 11 to 97; the sequence is ARRIHVKGKV…VVAQGFTQKP (87 aa). Active-site residues include Arg26 and Asn44.

It belongs to the acylphosphatase family.

It carries out the reaction an acyl phosphate + H2O = a carboxylate + phosphate + H(+). The sequence is that of Acylphosphatase (acyP) from Rhizorhabdus wittichii (strain DSM 6014 / CCUG 31198 / JCM 15750 / NBRC 105917 / EY 4224 / RW1) (Sphingomonas wittichii).